Consider the following 308-residue polypeptide: UDP-N-acetylenolpyruvoylglucosamine reductase (308 aa).

The FAD-binding PCMH-type domain maps to 24–187 (RVGGPADWLF…VSASLQGVPG (164 aa)). The active site involves Arg-167. Residues 199 to 230 (QLDKRDQTQPTKERSAGSTFRNPAGFSSTGRA) are disordered. Over residues 200–213 (LDKRDQTQPTKERS) the composition is skewed to basic and acidic residues. Residues 214-228 (AGSTFRNPAGFSSTG) are compositionally biased toward polar residues. The active-site Proton donor is the Ser-216. Residue Glu-298 is part of the active site.

Belongs to the MurB family. It depends on FAD as a cofactor.

It localises to the cytoplasm. The catalysed reaction is UDP-N-acetyl-alpha-D-muramate + NADP(+) = UDP-N-acetyl-3-O-(1-carboxyvinyl)-alpha-D-glucosamine + NADPH + H(+). It participates in cell wall biogenesis; peptidoglycan biosynthesis. Its function is as follows. Cell wall formation. This Ruegeria pomeroyi (strain ATCC 700808 / DSM 15171 / DSS-3) (Silicibacter pomeroyi) protein is UDP-N-acetylenolpyruvoylglucosamine reductase.